The following is an 88-amino-acid chain: Kunitz-type serine protease inhibitor Hg1 (88 aa).

Positions 1–21 are cleaved as a signal peptide; that stretch reads MIIFYGLFSILVLTSINIAEA. One can recognise a BPTI/Kunitz inhibitor domain in the interval 29 to 79; sequence CLLPPKTGPCKGSFARYYFDIETGSCKAFIYGGCEGNSNNFSEKHHCEKRC. Disulfide bonds link cysteine 29–cysteine 79, cysteine 38–cysteine 62, and cysteine 54–cysteine 75. Asparagine 68 carries an N-linked (GlcNAc...) asparagine glycan.

Belongs to the venom Kunitz-type family. Scorpion delta-Ktx subfamily. Delta-Ktx 1 sub-subfamily. As to expression, expressed by the venom gland.

Its subcellular location is the secreted. In terms of biological role, dual-function toxin that inhibits trypsin at a molar ratio of 1:1 (Ki=107 nM) and inhibits mKv1.3/KCNA3 potassium channels (IC(50)=6.2 nM, and inhibits 80% of currents at 1 uM). The protein is Kunitz-type serine protease inhibitor Hg1 of Hoffmannihadrurus gertschi (Scorpion).